A 240-amino-acid polypeptide reads, in one-letter code: Sugar fermentation stimulation protein homolog (240 aa).

This sequence belongs to the SfsA family.

This is Sugar fermentation stimulation protein homolog from Saccharolobus islandicus (strain M.14.25 / Kamchatka #1) (Sulfolobus islandicus).